The sequence spans 670 residues: Lebercilin-like protein (670 aa).

A disordered region spans residues Lys30–Tyr51. Polar residues predominate over residues Phe38–Tyr51. Coiled-coil stretches lie at residues Leu148–Glu259 and Ala305–Ile336. The segment at His374–Thr393 is disordered. Positions Glu420–Ile440 form a coiled coil. 3 disordered regions span residues Arg495–Gly516, Lys557–Lys580, and Leu609–Ile670. 2 stretches are compositionally biased toward basic and acidic residues: residues Ser560–Ser572 and Gly621–His632. The span at Thr651–Thr662 shows a compositional bias: polar residues.

Belongs to the LCA5 family.

The polypeptide is Lebercilin-like protein (LCA5L) (Homo sapiens (Human)).